Reading from the N-terminus, the 55-residue chain is Sec-independent protein translocase protein TatA (55 aa).

The helical transmembrane segment at 1–21 (MGMSFSHLLIVLLIIFVLFGA) threads the bilayer.

Belongs to the TatA/E family. As to quaternary structure, the Tat system comprises two distinct complexes: a TatABC complex, containing multiple copies of TatA, TatB and TatC subunits, and a separate TatA complex, containing only TatA subunits. Substrates initially bind to the TatABC complex, which probably triggers association of the separate TatA complex to form the active translocon.

Its subcellular location is the cell inner membrane. Part of the twin-arginine translocation (Tat) system that transports large folded proteins containing a characteristic twin-arginine motif in their signal peptide across membranes. TatA could form the protein-conducting channel of the Tat system. The chain is Sec-independent protein translocase protein TatA from Rickettsia peacockii (strain Rustic).